Consider the following 342-residue polypeptide: S-adenosylmethionine:tRNA ribosyltransferase-isomerase (342 aa).

The protein belongs to the QueA family. As to quaternary structure, monomer.

It localises to the cytoplasm. The enzyme catalyses 7-aminomethyl-7-carbaguanosine(34) in tRNA + S-adenosyl-L-methionine = epoxyqueuosine(34) in tRNA + adenine + L-methionine + 2 H(+). It participates in tRNA modification; tRNA-queuosine biosynthesis. Functionally, transfers and isomerizes the ribose moiety from AdoMet to the 7-aminomethyl group of 7-deazaguanine (preQ1-tRNA) to give epoxyqueuosine (oQ-tRNA). In Listeria monocytogenes serotype 4b (strain F2365), this protein is S-adenosylmethionine:tRNA ribosyltransferase-isomerase.